The sequence spans 1142 residues: Probable serine/threonine-protein kinase fhkB (1142 aa).

Polar residues predominate over residues 1–16 (MSQDIQTQNSYSDELY). Disordered stretches follow at residues 1 to 359 (MSQD…RLSQ), 374 to 404 (NTHTNQLGQSSQQTNSPNVHFNSLQQKKKQQ), and 432 to 451 (QIIGSQSSQSSQLPPTQPPV). 2 stretches are compositionally biased toward low complexity: residues 17-72 (SSQI…FSQN) and 83-157 (QNSY…PSSQ). Residues 158-178 (KRFFQSQNDDFVPSSQVTSLQ) are compositionally biased toward polar residues. A coiled-coil region spans residues 186–302 (IQQQQQQQQQ…DYEQENDDDD (117 aa)). Over residues 187–260 (QQQQQQQQQQ…QQTQQQQQQP (74 aa)) the composition is skewed to low complexity. 2 stretches are compositionally biased toward acidic residues: residues 261–277 (QEDDDDYDDYDGYDNYE) and 283–325 (EGEE…EEES). Positions 333-348 (RALQSRSSQSRPLLRS) are enriched in low complexity. A compositionally biased stretch (polar residues) spans 374–397 (NTHTNQLGQSSQQTNSPNVHFNSL). Residues 393 to 434 (HFNSLQQKKKQQQQQQQQQQQQQQQQQQQQQQQQQQQSQQII) are a coiled coil. A compositionally biased stretch (low complexity) spans 432–443 (QIIGSQSSQSSQ). Residues 480 to 551 (IVVGRSSSCD…NGSYINGELI (72 aa)) enclose the FHA domain. A Protein kinase domain is found at 625–885 (YYFVKEIGSG…IKEALNHPWF (261 aa)). Residues 631–639 (IGSGGYGIV) and Lys654 each bind ATP. Residue Asp747 is the Proton acceptor of the active site. The tract at residues 947-1142 (FDNNNNNNNN…HQQYTQHTTM (196 aa)) is disordered. The span at 949 to 1034 (NNNNNNNNNN…HNHNLNNHNH (86 aa)) shows a compositional bias: low complexity. The segment covering 1035 to 1067 (NNNHHHNHNHNHNHNHNHNHNHNHNHNHNHNHN) has biased composition (basic residues). Low complexity predominate over residues 1068–1133 (NHNNNNNNNN…NNINNNNNYH (66 aa)). The stretch at 1090-1132 (NNNNNNNNNNNNNNNNNNNNYYNNNINNINNNINNNINNNNNY) forms a coiled coil.

It belongs to the protein kinase superfamily. CAMK Ser/Thr protein kinase family. CHK2 subfamily.

The enzyme catalyses L-seryl-[protein] + ATP = O-phospho-L-seryl-[protein] + ADP + H(+). It catalyses the reaction L-threonyl-[protein] + ATP = O-phospho-L-threonyl-[protein] + ADP + H(+). The chain is Probable serine/threonine-protein kinase fhkB (fhkB) from Dictyostelium discoideum (Social amoeba).